Here is a 442-residue protein sequence, read N- to C-terminus: D-serine dehydratase (442 aa).

Lys-118 carries the post-translational modification N6-(pyridoxal phosphate)lysine.

Belongs to the serine/threonine dehydratase family. DsdA subfamily. In terms of assembly, monomer. Pyridoxal 5'-phosphate serves as cofactor.

It carries out the reaction D-serine = pyruvate + NH4(+). The sequence is that of D-serine dehydratase from Escherichia coli O157:H7.